A 185-amino-acid chain; its full sequence is Elongation factor P (185 aa).

Belongs to the elongation factor P family.

It localises to the cytoplasm. The protein operates within protein biosynthesis; polypeptide chain elongation. Involved in peptide bond synthesis. Stimulates efficient translation and peptide-bond synthesis on native or reconstituted 70S ribosomes in vitro. Probably functions indirectly by altering the affinity of the ribosome for aminoacyl-tRNA, thus increasing their reactivity as acceptors for peptidyl transferase. The chain is Elongation factor P from Nostoc punctiforme (strain ATCC 29133 / PCC 73102).